A 107-amino-acid chain; its full sequence is MNTDLLVTTTEHIPGKEYEVIGEVFGLTTQSKNVLRNMGAALKNVVGGEIKDYTKMLDEARNISVDRLRKNARDMGADAVVMMRFDSGSIGTDMQSVAAYGTAVKYV.

Belongs to the UPF0145 family.

The chain is UPF0145 protein LVIS_1527 from Levilactobacillus brevis (strain ATCC 367 / BCRC 12310 / CIP 105137 / JCM 1170 / LMG 11437 / NCIMB 947 / NCTC 947) (Lactobacillus brevis).